A 172-amino-acid polypeptide reads, in one-letter code: uncharacterized protein (172 aa).

The N-acetyltransferase domain maps to 12–172; that stretch reads IRLRCMEDRD…IAVYERKSYN (161 aa).

This is an uncharacterized protein from Bacillus subtilis (strain 168).